The chain runs to 517 residues: Maturase K (517 aa).

This sequence belongs to the intron maturase 2 family. MatK subfamily.

It is found in the plastid. Its subcellular location is the chloroplast. Its function is as follows. Usually encoded in the trnK tRNA gene intron. Probably assists in splicing its own and other chloroplast group II introns. This is Maturase K from Dracula chimaera.